A 98-amino-acid polypeptide reads, in one-letter code: DNA-binding protein Fis (98 aa).

The H-T-H motif DNA-binding region spans 74-93 (QTRAALMMGINRGTLRKKLK).

This sequence belongs to the transcriptional regulatory Fis family. As to quaternary structure, homodimer.

Functionally, activates ribosomal RNA transcription. Plays a direct role in upstream activation of rRNA promoters. This chain is DNA-binding protein Fis, found in Citrobacter koseri (strain ATCC BAA-895 / CDC 4225-83 / SGSC4696).